The primary structure comprises 170 residues: Peptide deformylase (170 aa).

The Fe cation site is built by C94 and H136. The active site involves E137. H140 provides a ligand contact to Fe cation.

Belongs to the polypeptide deformylase family. Fe(2+) is required as a cofactor.

The catalysed reaction is N-terminal N-formyl-L-methionyl-[peptide] + H2O = N-terminal L-methionyl-[peptide] + formate. In terms of biological role, removes the formyl group from the N-terminal Met of newly synthesized proteins. Requires at least a dipeptide for an efficient rate of reaction. N-terminal L-methionine is a prerequisite for activity but the enzyme has broad specificity at other positions. The chain is Peptide deformylase from Wolinella succinogenes (strain ATCC 29543 / DSM 1740 / CCUG 13145 / JCM 31913 / LMG 7466 / NCTC 11488 / FDC 602W) (Vibrio succinogenes).